Here is a 756-residue protein sequence, read N- to C-terminus: Protease KEX1 (756 aa).

The signal sequence occupies residues Met1–Pro24. 3 N-linked (GlcNAc...) asparagine glycosylation sites follow: Asn121, Asn144, and Asn152. The Peptidase S8 domain maps to Gln130–Val440. Catalysis depends on charge relay system residues Asp164 and His202. Disulfide bonds link Cys218–Cys365 and Cys310–Cys340. Ser373 acts as the Charge relay system in catalysis. 2 N-linked (GlcNAc...) asparagine glycosylation sites follow: Asn392 and Asn538. The 135-residue stretch at Val449–Asp583 folds into the P/Homo B domain. The tract at residues Ala599–Leu632 is disordered. Positions Ser606–Gly628 are enriched in low complexity. The chain crosses the membrane as a helical span at residues Leu641–Leu661. Residues Glu715–Lys756 are disordered. Over residues Arg721–Lys756 the composition is skewed to polar residues.

It belongs to the peptidase S8 family. Furin subfamily. It depends on Ca(2+) as a cofactor.

It is found in the membrane. Probably involved in the processing of the precursor of m1-toxin and alpha-factor. This is Protease KEX1 (KEX1) from Kluyveromyces lactis (strain ATCC 8585 / CBS 2359 / DSM 70799 / NBRC 1267 / NRRL Y-1140 / WM37) (Yeast).